A 543-amino-acid chain; its full sequence is Chaperonin GroEL (543 aa).

Residues 30-33 (TLGP), K51, 87-91 (DGTTT), G415, 480-482 (NAL), and D496 each bind ATP.

The protein belongs to the chaperonin (HSP60) family. As to quaternary structure, forms a cylinder of 14 subunits composed of two heptameric rings stacked back-to-back. Interacts with the co-chaperonin GroES.

It is found in the cytoplasm. It carries out the reaction ATP + H2O + a folded polypeptide = ADP + phosphate + an unfolded polypeptide.. Together with its co-chaperonin GroES, plays an essential role in assisting protein folding. The GroEL-GroES system forms a nano-cage that allows encapsulation of the non-native substrate proteins and provides a physical environment optimized to promote and accelerate protein folding. This Gemmatimonas aurantiaca (strain DSM 14586 / JCM 11422 / NBRC 100505 / T-27) protein is Chaperonin GroEL.